The following is a 307-amino-acid chain: UDP-N-acetylenolpyruvoylglucosamine reductase (307 aa).

The FAD-binding PCMH-type domain occupies 33–197 (TGGNADFYIT…LEAAFTLAPG (165 aa)). Arg176 is an active-site residue. The active-site Proton donor is the Ser226. The active site involves Glu296.

This sequence belongs to the MurB family. FAD serves as cofactor.

It is found in the cytoplasm. The enzyme catalyses UDP-N-acetyl-alpha-D-muramate + NADP(+) = UDP-N-acetyl-3-O-(1-carboxyvinyl)-alpha-D-glucosamine + NADPH + H(+). Its pathway is cell wall biogenesis; peptidoglycan biosynthesis. Its function is as follows. Cell wall formation. The polypeptide is UDP-N-acetylenolpyruvoylglucosamine reductase (Staphylococcus aureus (strain COL)).